The primary structure comprises 99 residues: Large ribosomal subunit protein bL21 (99 aa).

Belongs to the bacterial ribosomal protein bL21 family. In terms of assembly, part of the 50S ribosomal subunit. Contacts protein L20.

Its function is as follows. This protein binds to 23S rRNA in the presence of protein L20. The protein is Large ribosomal subunit protein bL21 of Anaplasma phagocytophilum (strain HZ).